The chain runs to 296 residues: 4-hydroxybenzoate octaprenyltransferase (296 aa).

A run of 8 helical transmembrane segments spans residues 22–42 (PIGILLLLWPTLWALWLSALG), 46–66 (WIVVWIFILGTVLMRSAGCVI), 99–121 (LFAGLSLLSFLLVVFLGNTLVIW), 139–159 (FFAIPQAYLGVAFGFGIPMAY), 163–183 (LGEVPAEAWWLLLANVFWAVA), 211–231 (FDVAAVMLCYGVTLAIIGGIG), 238–258 (PAFYAGLAVATCIMGVHYTWI), and 270–290 (FLHNNWVGLSIFVGIVVDFLV).

Belongs to the UbiA prenyltransferase family. Requires Mg(2+) as cofactor.

It localises to the cell inner membrane. The enzyme catalyses all-trans-octaprenyl diphosphate + 4-hydroxybenzoate = 4-hydroxy-3-(all-trans-octaprenyl)benzoate + diphosphate. It functions in the pathway cofactor biosynthesis; ubiquinone biosynthesis. Its function is as follows. Catalyzes the prenylation of para-hydroxybenzoate (PHB) with an all-trans polyprenyl group. Mediates the second step in the final reaction sequence of ubiquinone-8 (UQ-8) biosynthesis, which is the condensation of the polyisoprenoid side chain with PHB, generating the first membrane-bound Q intermediate 3-octaprenyl-4-hydroxybenzoate. This chain is 4-hydroxybenzoate octaprenyltransferase, found in Dechloromonas aromatica (strain RCB).